The chain runs to 574 residues: Excitatory amino acid transporter 2 (574 aa).

Residues 1–44 (MASTEGANNMPKQVEVRMHDSHLGSEEPKHRHLGLRLCDKLGKN) are Cytoplasmic-facing. 3 positions are modified to phosphoserine: serine 3, serine 21, and serine 25. Residue cysteine 38 is the site of S-palmitoyl cysteine attachment. Residues 45-64 (LLLTLTVFGVILGAVCGGLL) form a helical membrane-spanning segment. The Extracellular segment spans residues 65–87 (RLASPIHPDVVMLIAFPGDILMR). The helical transmembrane segment at 88–108 (MLKMLILPLIISSLITGLSGL) threads the bilayer. At 109–120 (DAKASGRLGTRA) the chain is on the cytoplasmic side. A helical membrane pass occupies residues 121–142 (MVYYMSTTIIAAVLGVILVLAI). At 143-235 (HPGNPKLKKQ…TKMVIKKGLE (93 aa)) the chain is on the extracellular side. N-linked (GlcNAc...) asparagine glycosylation is found at asparagine 206 and asparagine 216. The helical transmembrane segment at 236–259 (FKDGMNVLGLIGFFIAFGIAMGKM) threads the bilayer. Over 260-268 (GDQAKLMVD) the chain is Cytoplasmic. Residues 269–296 (FFNILNEIVMKLVIMIMWYSPLGIACLI) traverse the membrane as a helical segment. The Extracellular portion of the chain corresponds to 297-317 (CGKIIAIKDLEVVARQLGMYM). Residues 318–339 (VTVIIGLIIHGGIFLPLIYFVV) traverse the membrane as a helical segment. Topologically, residues 340 to 344 (TRKNP) are cytoplasmic. The discontinuously helical intramembrane region spans 345-375 (FSFFAGIFQAWITALGTASSAGTLPVTFRCL). 362-364 (ASS) contributes to the L-aspartate binding site. Over 376–384 (EENLGIDKR) the chain is Cytoplasmic. A helical membrane pass occupies residues 385-411 (VTRFVLPVGATINMDGTALYEAVAAIF). Na(+)-binding residues include glycine 393, threonine 395, and asparagine 397. Threonine 401 serves as a coordination point for L-aspartate. Over 412–424 (IAQMNGVVLDGGQ) the chain is Extracellular. The segment at residues 425 to 458 (IVTVSLTATLASVGAASIPSAGLVTMLLILTAVG) is an intramembrane region (discontinuously helical). 442-446 (IPSAG) contacts L-aspartate. Over 459 to 471 (LPTEDISLLVAVD) the chain is Extracellular. A helical transmembrane segment spans residues 472–493 (WLLDRMRTSVNVVGDSFGAGIV). The L-aspartate site is built by aspartate 475 and asparagine 482. 2 residues coordinate Na(+): asparagine 482 and aspartate 486. Over 494 to 574 (YHLSKSELDT…VEEEPWKREK (81 aa)) the chain is Cytoplasmic. A phosphoserine mark is found at serine 506, serine 521, serine 532, and serine 534. Position 539 is a phosphotyrosine (tyrosine 539). Residues serine 544, serine 560, and serine 564 each carry the phosphoserine modification.

Belongs to the dicarboxylate/amino acid:cation symporter (DAACS) (TC 2.A.23) family. SLC1A2 subfamily. In terms of assembly, homotrimer. Isoform 3 can oligomerize with isoform 1. Interacts with AJUBA. Post-translationally, glycosylated. Palmitoylation at Cys-38 is not required for correct subcellular localization, but is important for glutamate uptake activity.

It localises to the cell membrane. It catalyses the reaction K(+)(in) + L-glutamate(out) + 3 Na(+)(out) + H(+)(out) = K(+)(out) + L-glutamate(in) + 3 Na(+)(in) + H(+)(in). It carries out the reaction K(+)(in) + L-aspartate(out) + 3 Na(+)(out) + H(+)(out) = K(+)(out) + L-aspartate(in) + 3 Na(+)(in) + H(+)(in). The enzyme catalyses D-aspartate(out) + K(+)(in) + 3 Na(+)(out) + H(+)(out) = D-aspartate(in) + K(+)(out) + 3 Na(+)(in) + H(+)(in). Functionally, sodium-dependent, high-affinity amino acid transporter that mediates the uptake of L-glutamate and also L-aspartate and D-aspartate. Functions as a symporter that transports one amino acid molecule together with two or three Na(+) ions and one proton, in parallel with the counter-transport of one K(+) ion. Mediates Cl(-) flux that is not coupled to amino acid transport; this avoids the accumulation of negative charges due to aspartate and Na(+) symport. Essential for the rapid removal of released glutamate from the synaptic cleft, and for terminating the postsynaptic action of glutamate. The polypeptide is Excitatory amino acid transporter 2 (Homo sapiens (Human)).